The primary structure comprises 521 residues: Alkyl hydroperoxide reductase subunit F (521 aa).

Lys53 bears the N6-acetyllysine mark. FAD is bound at residue 214–229; that stretch reads DVLIVGSGPAGAAAAI. An intrachain disulfide couples Cys345 to Cys348. Residue Lys354 is modified to N6-acetyllysine. 357–371 contacts NAD(+); that stretch reads RVAVIGGGNSGVEAA. Residue 478-488 coordinates FAD; sequence TNVKGVFAAGD.

Belongs to the class-II pyridine nucleotide-disulfide oxidoreductase family. Homodimer. The cofactor is FAD.

Functionally, serves to protect the cell against DNA damage by alkyl hydroperoxides. It can use either NADH or NADPH as electron donor for direct reduction of redox dyes or of alkyl hydroperoxides when combined with the AhpC protein. The sequence is that of Alkyl hydroperoxide reductase subunit F (ahpF) from Escherichia coli (strain K12).